A 248-amino-acid polypeptide reads, in one-letter code: PF03932 family protein CutC (248 aa).

It belongs to the CutC family. As to quaternary structure, homodimer.

It is found in the cytoplasm. This chain is PF03932 family protein CutC, found in Shigella boydii serotype 18 (strain CDC 3083-94 / BS512).